A 192-amino-acid chain; its full sequence is RNA pyrophosphohydrolase (192 aa).

The Nudix hydrolase domain maps to 6-149; the sequence is GYRPNVGIVI…KKDVYRKVMK (144 aa). Positions 38-59 match the Nudix box motif; the sequence is GGINDNETAEQAMYRELYEEAG.

This sequence belongs to the Nudix hydrolase family. RppH subfamily. A divalent metal cation serves as cofactor.

Accelerates the degradation of transcripts by removing pyrophosphate from the 5'-end of triphosphorylated RNA, leading to a more labile monophosphorylated state that can stimulate subsequent ribonuclease cleavage. The protein is RNA pyrophosphohydrolase of Histophilus somni (strain 129Pt) (Haemophilus somnus).